The sequence spans 189 residues: Vacuolar iron transporter homolog 2 (189 aa).

Topologically, residues 1 to 10 (MARAQWLRAA) are cytoplasmic. Residues 11–31 (VLGANDGLVSVASLMIGIGAV) form a helical membrane-spanning segment. Over 32–38 (NENNKAM) the chain is Vacuolar. The chain crosses the membrane as a helical span at residues 39-59 (LVSGLAGLVAGACSMAIGEFV). Over 60–97 (SVYAQYDIEVTQIERDGDIDGADAAAAREKLPSPTQAA) the chain is Cytoplasmic. The helical transmembrane segment at 98 to 118 (FASALAFAIGGLLPLLTSGFI) threads the bilayer. Over 119–124 (KPWGPR) the chain is Vacuolar. Residues 125-145 (VGVVCAASSVGLAGFGAAGGY) traverse the membrane as a helical segment. Topologically, residues 146-159 (LGGANMVRSGTRVL) are cytoplasmic. The helical transmembrane segment at 160–180 (LGGWLAMLITYAVLRLFATIF) threads the bilayer. Over 181–189 (HGMNISSSA) the chain is Vacuolar.

It belongs to the CCC1 family.

The protein resides in the vacuole membrane. The catalysed reaction is Fe(2+)(in) = Fe(2+)(out). In terms of biological role, probable vacuolar iron transporter that may be involved in the regulation of iron distribution throughout the plant. The polypeptide is Vacuolar iron transporter homolog 2 (Oryza sativa subsp. japonica (Rice)).